The sequence spans 235 residues: Sugar fermentation stimulation protein homolog (235 aa).

This sequence belongs to the SfsA family.

The protein is Sugar fermentation stimulation protein homolog of Pseudomonas paraeruginosa (strain DSM 24068 / PA7) (Pseudomonas aeruginosa (strain PA7)).